The following is a 520-amino-acid chain: Pentatricopeptide repeat-containing protein At1g28690, mitochondrial (520 aa).

Residues 1-19 (MRIFRFTSISPRILPSNHY) constitute a mitochondrion transit peptide. PPR repeat units follow at residues 68 to 98 (DLNI…LPKP), 99 to 133 (TLSA…GEKA), 134 to 168 (DGYT…RIIK), 174 to 208 (DDVL…NVVC), 209 to 235 (CTSM…TKVK), 236 to 271 (DIVV…GFHP), 272 to 306 (NIST…GVYT), 307 to 337 (HIKM…MQEK), 338 to 372 (NVFS…RIEP), 373 to 403 (NYVT…MQRD), and 409 to 439 (KMEH…MPER). Residues 444–520 (IWAALLSSCN…TIGRSWTSED (77 aa)) are type E motif.

Belongs to the PPR family. PCMP-E subfamily.

It is found in the mitochondrion. The chain is Pentatricopeptide repeat-containing protein At1g28690, mitochondrial (PCMP-E34) from Arabidopsis thaliana (Mouse-ear cress).